A 246-amino-acid chain; its full sequence is Small ribosomal subunit protein uS2 (246 aa).

Belongs to the universal ribosomal protein uS2 family.

The polypeptide is Small ribosomal subunit protein uS2 (Saccharophagus degradans (strain 2-40 / ATCC 43961 / DSM 17024)).